The sequence spans 184 residues: ATP synthase subunit delta (184 aa).

It belongs to the ATPase delta chain family. As to quaternary structure, F-type ATPases have 2 components, F(1) - the catalytic core - and F(0) - the membrane proton channel. F(1) has five subunits: alpha(3), beta(3), gamma(1), delta(1), epsilon(1). F(0) has three main subunits: a(1), b(2) and c(10-14). The alpha and beta chains form an alternating ring which encloses part of the gamma chain. F(1) is attached to F(0) by a central stalk formed by the gamma and epsilon chains, while a peripheral stalk is formed by the delta and b chains.

It is found in the cell inner membrane. Functionally, f(1)F(0) ATP synthase produces ATP from ADP in the presence of a proton or sodium gradient. F-type ATPases consist of two structural domains, F(1) containing the extramembraneous catalytic core and F(0) containing the membrane proton channel, linked together by a central stalk and a peripheral stalk. During catalysis, ATP synthesis in the catalytic domain of F(1) is coupled via a rotary mechanism of the central stalk subunits to proton translocation. Its function is as follows. This protein is part of the stalk that links CF(0) to CF(1). It either transmits conformational changes from CF(0) to CF(1) or is implicated in proton conduction. The chain is ATP synthase subunit delta from Zymomonas mobilis subsp. mobilis (strain ATCC 31821 / ZM4 / CP4).